A 180-amino-acid polypeptide reads, in one-letter code: Probable chorismate pyruvate-lyase (180 aa).

The substrate site is built by R82, L120, and E165.

This sequence belongs to the UbiC family.

Its subcellular location is the cytoplasm. It catalyses the reaction chorismate = 4-hydroxybenzoate + pyruvate. It functions in the pathway cofactor biosynthesis; ubiquinone biosynthesis. Functionally, removes the pyruvyl group from chorismate, with concomitant aromatization of the ring, to provide 4-hydroxybenzoate (4HB) for the ubiquinone pathway. This is Probable chorismate pyruvate-lyase from Aliivibrio fischeri (strain ATCC 700601 / ES114) (Vibrio fischeri).